The following is an 873-amino-acid chain: Leucine--tRNA ligase (873 aa).

Positions 43–53 (PYPSGSLHMGH) match the 'HIGH' region motif. The short motif at 624 to 628 (TMSKS) is the 'KMSKS' region element. An ATP-binding site is contributed by K627.

Belongs to the class-I aminoacyl-tRNA synthetase family.

Its subcellular location is the cytoplasm. The enzyme catalyses tRNA(Leu) + L-leucine + ATP = L-leucyl-tRNA(Leu) + AMP + diphosphate. The polypeptide is Leucine--tRNA ligase (Synechococcus sp. (strain JA-3-3Ab) (Cyanobacteria bacterium Yellowstone A-Prime)).